Consider the following 675-residue polypeptide: MRSMMMEREGRNEIEREVIDDLEETQNEGDDFKSIPPWKEQITFRGIVASLIIGIIYSVIVMKLNLTTGLVPNLNVSAALLAFVFLRSWTKLLTKAGIVTKPFTKQENTVVQTCAVACYSIAVGGGFGSYLLGLNRITYEQSGGTHTDGNYPEGTKEPGIGWMTAFLFFTCFVGLLALVPLRKIMIIDYKLTYPSGTATAVLINGFHTPKGNKMAKKQVFGFVKYFSFSFIWAFFQWFFSGGTECGFIQFPTFGLEALKNTFYFDFSMTYVGAGMICPHIVNISLLFGAVLSWGIMWPLIKGLKGDWFPSTLPENSMKSLNGYKVFISISLILGDGLYQFIKILFKTGINMYVKLNNRNSGKSNSEKDKQSIADLKRDEIFVRDSIPLWVAAVGYAAFSVVSIIAIPIMFPELKWYFIVVAYMLAPSLGFSNAYGAGLTDMNMAYNYGKVALFILAAMAGKQNGVVAGLVGCGLIKSIVSISSDLMHDFKTGHLTLTSPRSMLVSQAIGTAIGCVVAPLTFFLFYKAFDVGNQEGEYKAPYALVYRNMAILGVEGFSALPQHCLQLCYGFFAFAVAANLVRDRLPDKIGNWVPLPMAMAVPFLVGGYFAIDMCVGSLIVFAWNMRDRVKAGLMVPAVASGLICGDGLWILPSSVLALAGVRPPICMGFMPSKYSS.

The next 14 membrane-spanning stretches (helical) occupy residues 42–62, 66–86, 114–134, 159–179, 219–239, 280–300, 325–345, 386–406, 408–428, 450–470, 504–524, 556–576, 602–622, and 630–650; these read ITFRGIVASLIIGIIYSVIVM, LTTGLVPNLNVSAALLAFVFL, CAVACYSIAVGGGFGSYLLGL, GIGWMTAFLFFTCFVGLLALV, VFGFVKYFSFSFIWAFFQWFF, IVNISLLFGAVLSWGIMWPLI, VFISISLILGDGLYQFIKILF, IPLWVAAVGYAAFSVVSIIAI, IMFPELKWYFIVVAYMLAPSL, VALFILAAMAGKQNGVVAGLV, VSQAIGTAIGCVVAPLTFFLF, FSALPQHCLQLCYGFFAFAVA, FLVGGYFAIDMCVGSLIVFAW, and AGLMVPAVASGLICGDGLWIL.

This sequence belongs to the YSL (TC 2.A.67.2) family. As to expression, expressed in leaves, anthers and pollen grains. Restricted to the vasculature.

It localises to the membrane. Its function is as follows. May be involved in the lateral transport of nicotianamine-chelated metals in the vasculature. This Arabidopsis thaliana (Mouse-ear cress) protein is Metal-nicotianamine transporter YSL3 (YSL3).